The sequence spans 55 residues: ATP synthase F(0) complex subunit 8 (55 aa).

A helical transmembrane segment spans residues 4 to 24 (LNPAPWFTILVFSWMIFLAII). The span at 32–41 (TSPNDSSPLS) shows a compositional bias: polar residues. The disordered stretch occupies residues 32-55 (TSPNDSSPLSTEKHKTESWDWPWQ).

The protein belongs to the ATPase protein 8 family. Component of the ATP synthase complex composed at least of ATP5F1A/subunit alpha, ATP5F1B/subunit beta, ATP5MC1/subunit c (homooctomer), MT-ATP6/subunit a, MT-ATP8/subunit 8, ATP5ME/subunit e, ATP5MF/subunit f, ATP5MG/subunit g, ATP5MK/subunit k, ATP5MJ/subunit j, ATP5F1C/subunit gamma, ATP5F1D/subunit delta, ATP5F1E/subunit epsilon, ATP5PF/subunit F6, ATP5PB/subunit b, ATP5PD/subunit d, ATP5PO/subunit OSCP. ATP synthase complex consists of a soluble F(1) head domain (subunits alpha(3) and beta(3)) - the catalytic core - and a membrane F(0) domain - the membrane proton channel (subunits c, a, 8, e, f, g, k and j). These two domains are linked by a central stalk (subunits gamma, delta, and epsilon) rotating inside the F1 region and a stationary peripheral stalk (subunits F6, b, d, and OSCP).

Its subcellular location is the mitochondrion membrane. Subunit 8, of the mitochondrial membrane ATP synthase complex (F(1)F(0) ATP synthase or Complex V) that produces ATP from ADP in the presence of a proton gradient across the membrane which is generated by electron transport complexes of the respiratory chain. ATP synthase complex consist of a soluble F(1) head domain - the catalytic core - and a membrane F(1) domain - the membrane proton channel. These two domains are linked by a central stalk rotating inside the F(1) region and a stationary peripheral stalk. During catalysis, ATP synthesis in the catalytic domain of F(1) is coupled via a rotary mechanism of the central stalk subunits to proton translocation. In vivo, can only synthesize ATP although its ATP hydrolase activity can be activated artificially in vitro. Part of the complex F(0) domain. The sequence is that of ATP synthase F(0) complex subunit 8 from Formosania lacustris (Oriental stream loach).